We begin with the raw amino-acid sequence, 245 residues long: DNA repair protein RecO (245 aa).

The protein belongs to the RecO family.

Functionally, involved in DNA repair and RecF pathway recombination. The polypeptide is DNA repair protein RecO (Porphyromonas gingivalis (strain ATCC BAA-308 / W83)).